We begin with the raw amino-acid sequence, 158 residues long: Transcription elongation factor GreA (158 aa).

Residues 46 to 66 (AEYEAAKERQGFIEGRISELE) adopt a coiled-coil conformation.

It belongs to the GreA/GreB family.

Necessary for efficient RNA polymerase transcription elongation past template-encoded arresting sites. The arresting sites in DNA have the property of trapping a certain fraction of elongating RNA polymerases that pass through, resulting in locked ternary complexes. Cleavage of the nascent transcript by cleavage factors such as GreA or GreB allows the resumption of elongation from the new 3'terminus. GreA releases sequences of 2 to 3 nucleotides. The sequence is that of Transcription elongation factor GreA from Neisseria meningitidis serogroup B (strain ATCC BAA-335 / MC58).